The sequence spans 547 residues: Inositol 1,4,5-trisphosphate receptor-interacting protein-like 1 (547 aa).

The N-terminal stretch at 1-16 (MAVISLLFLAVMYVVH) is a signal peptide. Over 17–96 (HPLMVSDRMD…PFQASGQDGG (80 aa)) the chain is Extracellular. Residues 28 to 66 (DTLARSRQLEKRMSEEMRQLEIEFEERSRAAEEKQKAEN) adopt a coiled-coil conformation. The chain crosses the membrane as a helical span at residues 97–117 (PLGWMLGNLWNAGLFCLFLIF). Topologically, residues 118 to 547 (ELLRQNMQHE…LPCSPLAGGL (430 aa)) are cytoplasmic.

This sequence belongs to the ITPRIP family.

It localises to the cell membrane. Functions as a ligand of CD3E, inhibiting TCR-CD3 complex signaling to regulate T cell activation. Induces stable CD3E-NCK1 binding, thereby preventing the CD3E-ZAP70 interaction and subsequently inhibiting the activation of the downstream ERK-NFkB signaling cascade and calcium influx. This chain is Inositol 1,4,5-trisphosphate receptor-interacting protein-like 1 (Itpripl1), found in Rattus norvegicus (Rat).